Here is a 316-residue protein sequence, read N- to C-terminus: GTP cyclohydrolase FolE2 1 (316 aa).

Belongs to the GTP cyclohydrolase IV family.

It catalyses the reaction GTP + H2O = 7,8-dihydroneopterin 3'-triphosphate + formate + H(+). It functions in the pathway cofactor biosynthesis; 7,8-dihydroneopterin triphosphate biosynthesis; 7,8-dihydroneopterin triphosphate from GTP: step 1/1. Converts GTP to 7,8-dihydroneopterin triphosphate. This chain is GTP cyclohydrolase FolE2 1, found in Burkholderia orbicola (strain AU 1054).